The following is a 210-amino-acid chain: Prohead protease (210 aa).

A propeptide spanning residues 1-23 (MTQAAIDYNKLKSAPVHLDAYIK) is cleaved from the precursor. Catalysis depends on residues His-76, Ser-122, and Glu-148. A propeptide spanning residues 167 to 210 (SMNGHDYTEWRKSFTAISSKAVPAQERNLSELEKLAIALGYVKE) is cleaved from the precursor.

It belongs to the HK97 prohead protease protein family. Post-translationally, cleaves itself autocatalytically to yield the mature form of the protease.

The protein localises to the virion. Its function is as follows. Serine protease involved in capsid assembly and maturation. Cleaves the major capsid protein, the decoration protein, the portal protein to yield mature procapsids competent for DNA packaging. Acts as a trigger for assembly of the capsid protein. The protein is Prohead protease of Escherichia coli (Enterobacteria phage T5).